Reading from the N-terminus, the 863-residue chain is MQELYNPSEIEALVQKHWHEHKTFEVTEDESKEKFYCLSMFPYPSGRLHMGHVRNYTIGDVVARYQRLQGKNVLQPIGWDSFGLPAENAAINNKASPAPWTYENIDYMKNQLKLLGFGYDWSREIATCTPEYYRWEQWFFTQLYAKGLVYKKTSSVNWCPNDETVLANEQVQDGCCWRCDTEVIQKEIPQWFIKITDYAEELLNDIDTLDGWPEQVKAMQRNWIGRSEGIEMTFAVADSDASFDIYTTRPDTLMGVTYVAIAAGHPLAEQSAQNNPELAAFLEECKNADTTEAAMASMEKKGVATGLQAIHPISGKLVPIWVANFVLMNYGTGAVMSVPAHDQRDYEFATKYQLAIEAVIKPVDGEVDVSKEAYTEKGVVFNSGDAFPELDGLDFQAAFEAIDARLTAEGKGKRQVNYRLRDWGVSRQRYWGAPIPMVTLADGTVVPTPEDQLPVILPEDVVMDGIQSPIKADKAWAETTVNGQPATRETDTFDTFMESSWYYARYCSPHADEMLDPAKANYWLPVDQYIGGIEHACMHLLYFRFFHKLLRDAGLVNSDEPAKQLLTQGMVLADAYYYTNEKGARVWVSPLEVTVVEKDDKGRIIKAIDNQGHELVYTGMSKMSKSKNNGIDPQVMVEKYGADTVRLFMMFASPPELTLEWQESGVEGAHRFIKRFWKLASDHVAAGKTEALDTSKLNADQKALRRELHKTIAKVSDDIARRQMFNTAVASVMELMNHLLKASQETAQDRALLAEALSAVTRLLYPIVPHMTFTLWNELGNEGDIEDSRWPEVDESALVEDSKLIVVQVNGKVRAKITVAADASKEDVEALGMSDEHVQKHTEGLTVRKVIYVPGKLLSIVAN.

The 'HIGH' region signature appears at proline 42–histidine 52. Residues lysine 622 to serine 626 carry the 'KMSKS' region motif. Residue lysine 625 coordinates ATP.

The protein belongs to the class-I aminoacyl-tRNA synthetase family.

The protein resides in the cytoplasm. The catalysed reaction is tRNA(Leu) + L-leucine + ATP = L-leucyl-tRNA(Leu) + AMP + diphosphate. The protein is Leucine--tRNA ligase of Shewanella frigidimarina (strain NCIMB 400).